Reading from the N-terminus, the 748-residue chain is Catalase-peroxidase (748 aa).

Residues Trp92–Tyr238 constitute a cross-link (tryptophyl-tyrosyl-methioninium (Trp-Tyr) (with M-264)). The active-site Proton acceptor is His93. A cross-link (tryptophyl-tyrosyl-methioninium (Tyr-Met) (with W-92)) is located at residues Tyr238–Met264. His279 provides a ligand contact to heme b.

This sequence belongs to the peroxidase family. Peroxidase/catalase subfamily. As to quaternary structure, homodimer or homotetramer. The cofactor is heme b. In terms of processing, formation of the three residue Trp-Tyr-Met cross-link is important for the catalase, but not the peroxidase activity of the enzyme.

The enzyme catalyses H2O2 + AH2 = A + 2 H2O. The catalysed reaction is 2 H2O2 = O2 + 2 H2O. Bifunctional enzyme with both catalase and broad-spectrum peroxidase activity. The polypeptide is Catalase-peroxidase (Xanthomonas campestris pv. campestris (strain 8004)).